Here is a 638-residue protein sequence, read N- to C-terminus: DNA gyrase subunit B (638 aa).

A Toprim domain is found at Ser-422–Pro-536. Glu-428, Asp-501, and Asp-503 together coordinate Mg(2+).

It belongs to the type II topoisomerase GyrB family. As to quaternary structure, heterotetramer, composed of two GyrA and two GyrB chains. In the heterotetramer, GyrA contains the active site tyrosine that forms a transient covalent intermediate with DNA, while GyrB binds cofactors and catalyzes ATP hydrolysis. Mg(2+) is required as a cofactor. It depends on Mn(2+) as a cofactor. The cofactor is Ca(2+).

It localises to the cytoplasm. The enzyme catalyses ATP-dependent breakage, passage and rejoining of double-stranded DNA.. Its function is as follows. A type II topoisomerase that negatively supercoils closed circular double-stranded (ds) DNA in an ATP-dependent manner to modulate DNA topology and maintain chromosomes in an underwound state. Negative supercoiling favors strand separation, and DNA replication, transcription, recombination and repair, all of which involve strand separation. Also able to catalyze the interconversion of other topological isomers of dsDNA rings, including catenanes and knotted rings. Type II topoisomerases break and join 2 DNA strands simultaneously in an ATP-dependent manner. This chain is DNA gyrase subunit B, found in Bacillus subtilis (strain 168).